The primary structure comprises 874 residues: Alanine--tRNA ligase (874 aa).

Residues His564, His568, Cys665, and His669 each contribute to the Zn(2+) site.

This sequence belongs to the class-II aminoacyl-tRNA synthetase family. Zn(2+) serves as cofactor.

It localises to the cytoplasm. The catalysed reaction is tRNA(Ala) + L-alanine + ATP = L-alanyl-tRNA(Ala) + AMP + diphosphate. Functionally, catalyzes the attachment of alanine to tRNA(Ala) in a two-step reaction: alanine is first activated by ATP to form Ala-AMP and then transferred to the acceptor end of tRNA(Ala). Also edits incorrectly charged Ser-tRNA(Ala) and Gly-tRNA(Ala) via its editing domain. This is Alanine--tRNA ligase from Acidovorax sp. (strain JS42).